A 154-amino-acid chain; its full sequence is Myoglobin (154 aa).

One can recognise a Globin domain in the interval 2-148 (GLSDGEWQLV…FRKDIAAKYK (147 aa)). S4 is subject to Phosphoserine. H65 is a nitrite binding site. H65 is a binding site for O2. T68 is subject to Phosphothreonine. H94 serves as a coordination point for heme b.

Belongs to the globin family. Monomeric.

The protein resides in the cytoplasm. The protein localises to the sarcoplasm. It carries out the reaction Fe(III)-heme b-[protein] + nitric oxide + H2O = Fe(II)-heme b-[protein] + nitrite + 2 H(+). The enzyme catalyses H2O2 + AH2 = A + 2 H2O. In terms of biological role, monomeric heme protein which primary function is to store oxygen and facilitate its diffusion within muscle tissues. Reversibly binds oxygen through a pentacoordinated heme iron and enables its timely and efficient release as needed during periods of heightened demand. Depending on the oxidative conditions of tissues and cells, and in addition to its ability to bind oxygen, it also has a nitrite reductase activity whereby it regulates the production of bioactive nitric oxide. Under stress conditions, like hypoxia and anoxia, it also protects cells against reactive oxygen species thanks to its pseudoperoxidase activity. This Delphinus delphis (Short-beaked common dolphin) protein is Myoglobin (MB).